Consider the following 185-residue polypeptide: Elongation factor P (185 aa).

Belongs to the elongation factor P family.

It is found in the cytoplasm. The protein operates within protein biosynthesis; polypeptide chain elongation. Its function is as follows. Involved in peptide bond synthesis. Stimulates efficient translation and peptide-bond synthesis on native or reconstituted 70S ribosomes in vitro. Probably functions indirectly by altering the affinity of the ribosome for aminoacyl-tRNA, thus increasing their reactivity as acceptors for peptidyl transferase. The sequence is that of Elongation factor P from Finegoldia magna (strain ATCC 29328 / DSM 20472 / WAL 2508) (Peptostreptococcus magnus).